Here is a 444-residue protein sequence, read N- to C-terminus: Acyl-CoA 6-desaturase (444 aa).

Residues 1-131 are Cytoplasmic-facing; the sequence is MGKGGNQGEG…DMNLFKTNHV (131 aa). The 78-residue stretch at 18–95 folds into the Cytochrome b5 heme-binding domain; it reads VPTFSWEEIQ…LKPLLIGELA (78 aa). A helical membrane pass occupies residues 132-152; it reads FFLLLLAHIIALESIAWFTVF. The Lumenal portion of the chain corresponds to 153-157; sequence YFGNG. The chain crosses the membrane as a helical span at residues 158 to 178; it reads WISTLITAFVLATSQAQAGWL. Over 179–264 the chain is Cytoplasmic; the sequence is QHDYGHLSVY…KYLPYNHQHE (86 aa). The Histidine box-1 signature appears at 180-184; it reads HDYGH. The short motif at 217–221 is the Histidine box-2 element; that stretch reads HFQHH. Residues 265–285 traverse the membrane as a helical segment; the sequence is YFFLIGPPLLIPMYFQYQIIM. The Lumenal segment spans residues 286–305; that stretch reads TMIVHKNWVDLAWAISYYIR. The chain crosses the membrane as a helical span at residues 306–326; sequence FFITYIPFYGILGALLFLNFI. Residues 327–444 lie on the Cytoplasmic side of the membrane; it reads RFLESHWFVW…KLWLDAYLHK (118 aa). The Histidine box-3 signature appears at 382–386; it reads QIEHH.

Belongs to the fatty acid desaturase type 1 family.

The protein resides in the endoplasmic reticulum membrane. The enzyme catalyses (9Z,12Z)-octadecadienoyl-CoA + 2 Fe(II)-[cytochrome b5] + O2 + 2 H(+) = (6Z,9Z,12Z)-octadecatrienoyl-CoA + 2 Fe(III)-[cytochrome b5] + 2 H2O. The catalysed reaction is (9Z,12Z,15Z)-octadecatrienoyl-CoA + 2 Fe(II)-[cytochrome b5] + O2 + 2 H(+) = (6Z,9Z,12Z,15Z)-octadecatetraenoyl-CoA + 2 Fe(III)-[cytochrome b5] + 2 H2O. It catalyses the reaction (9Z,12Z,15Z,18Z,21Z)-tetracosapentaenoyl-CoA + 2 Fe(II)-[cytochrome b5] + O2 + 2 H(+) = (6Z,9Z,12Z,15Z,18Z,21Z)-tetracosahexaenoyl-CoA + 2 Fe(III)-[cytochrome b5] + 2 H2O. It carries out the reaction (11E)-octadecenoyl-CoA + 2 Fe(II)-[cytochrome b5] + O2 + 2 H(+) = (6Z,11E)-octadecadienoyl-CoA + 2 Fe(III)-[cytochrome b5] + 2 H2O. The enzyme catalyses (11Z,14Z)-eicosadienoyl-CoA + 2 Fe(II)-[cytochrome b5] + O2 + 2 H(+) = (8Z,11Z,14Z)-eicosatrienoyl-CoA + 2 Fe(III)-[cytochrome b5] + 2 H2O. The catalysed reaction is (11Z,14Z,17Z)-eicosatrienoyl-CoA + 2 Fe(II)-[cytochrome b5] + O2 + 2 H(+) = (8Z,11Z,14Z,17Z)-eicosatetraenoyl-CoA + 2 Fe(III)-[cytochrome b5] + 2 H2O. It functions in the pathway lipid metabolism; polyunsaturated fatty acid biosynthesis. In terms of biological role, involved in the biosynthesis of highly unsaturated fatty acids (HUFA) from the essential polyunsaturated fatty acids (PUFA) linoleic acid (LA) (18:2n-6) and alpha-linolenic acid (ALA) (18:3n-3) precursors, acting as a fatty acyl-coenzyme A (CoA) desaturase that introduces a cis double bond at carbon 6 of the fatty acyl chain. Catalyzes the first and rate limiting step in this pathway which is the desaturation of LA (18:2n-6) and ALA (18:3n-3) into gamma-linoleate (GLA) (18:3n-6) and stearidonate (18:4n-3), respectively. Subsequently, in the biosynthetic pathway of HUFA n-3 series, it desaturates tetracosapentaenoate (24:5n-3) to tetracosahexaenoate (24:6n-3), which is then converted to docosahexaenoate (DHA)(22:6n-3), an important lipid for nervous system function. It can also desaturate (11E)-octadecenoate (trans-vaccenoate) at carbon 6 generating (6Z,11E)-octadecadienoate. In addition to Delta-6 activity, this enzyme exhibits Delta-8 activity with slight biases toward n-3 fatty acyl-CoA substrates. This chain is Acyl-CoA 6-desaturase (FADS2), found in Pongo abelii (Sumatran orangutan).